The following is a 532-amino-acid chain: Flavin-containing monooxygenase 3 (532 aa).

FAD-binding positions include 9–13, glutamate 32, 40–41, and 61–62; these read GAGVS, LW, and NS. NADP(+)-binding positions include 60-61 and 195-198; these read TN and SGCD. Serine 401 carries the phosphoserine modification. Residues 512-532 traverse the membrane as a helical segment; the sequence is CHLVKLFVLPVLFIAVFLALI.

This sequence belongs to the FMO family. FAD serves as cofactor.

It localises to the microsome membrane. Its subcellular location is the endoplasmic reticulum membrane. The catalysed reaction is trimethylamine + NADPH + O2 = trimethylamine N-oxide + NADP(+) + H2O. It carries out the reaction N,N-dimethylaniline + NADPH + O2 + H(+) = N,N-dimethylaniline N-oxide + NADP(+) + H2O. The enzyme catalyses hypotaurine + NADPH + O2 + H(+) = taurine + NADP(+) + H2O. It catalyses the reaction (S)-nicotine + NADPH + O2 = trans-(S)-nicotine N(1')-oxide + NADP(+) + H2O. The catalysed reaction is albendazole + NADPH + O2 + H(+) = albendazole S-oxide + NADP(+) + H2O. Essential hepatic enzyme that catalyzes the oxygenation of a wide variety of nitrogen- and sulfur-containing compounds including drugs as well as dietary compounds. Plays an important role in the metabolism of trimethylamine (TMA), via the production of trimethylamine N-oxide (TMAO) metabolite. TMA is generated by the action of gut microbiota using dietary precursors such as choline, choline containing compounds, betaine or L-carnitine. By regulating TMAO concentration, FMO3 directly impacts both platelet responsiveness and rate of thrombus formation. In Canis lupus familiaris (Dog), this protein is Flavin-containing monooxygenase 3 (FMO3).